The sequence spans 163 residues: NADH-quinone oxidoreductase subunit 9 (163 aa).

2 4Fe-4S ferredoxin-type domains span residues 54 to 84 and 94 to 123; these read LRRY…IDAE and TRYD…EGPN. Residues Cys64, Cys67, Cys70, Cys74, Cys103, Cys106, Cys109, and Cys113 each coordinate [4Fe-4S] cluster.

This sequence belongs to the complex I 23 kDa subunit family. In terms of assembly, NDH-1 is composed of at least 14 different subunits, Nqo1 to Nqo14. The complex has a L-shaped structure, with the hydrophobic arm (subunits Nqo7, Nqo8, Nqo10 to Nqo14) embedded in the inner membrane and the hydrophilic peripheral arm (subunits Nqo1 to Nqo6, Nqo9) protruding into the bacterial cytoplasm. The hydrophilic domain contains all the redox centers. Requires [4Fe-4S] cluster as cofactor.

Its subcellular location is the cell inner membrane. It catalyses the reaction a quinone + NADH + 5 H(+)(in) = a quinol + NAD(+) + 4 H(+)(out). Functionally, NDH-1 shuttles electrons from NADH, via FMN and iron-sulfur (Fe-S) centers, to quinones in the respiratory chain. The immediate electron acceptor for the enzyme in this species is believed to be ubiquinone. Couples the redox reaction to proton translocation (for every two electrons transferred, four hydrogen ions are translocated across the cytoplasmic membrane), and thus conserves the redox energy in a proton gradient. This is NADH-quinone oxidoreductase subunit 9 from Paracoccus denitrificans.